The chain runs to 417 residues: 3-oxo-isoapionate-4-phosphate decarboxylase (417 aa).

Residues lysine 177, aspartate 179, and glutamate 180 each coordinate Mg(2+). Lysine 177 is subject to N6-carboxylysine.

It belongs to the RuBisCO large chain family. Requires Mg(2+) as cofactor.

It carries out the reaction 3-oxoisoapionate 4-phosphate + H(+) = L-erythrulose 1-phosphate + CO2. It participates in carbohydrate metabolism. Involved in catabolism of D-apiose. Catalyzes the decarboxylation of 3-oxo-isoapionate 4-phosphate to L-erythrulose 1-phosphate. In Rhizobium etli (strain ATCC 51251 / DSM 11541 / JCM 21823 / NBRC 15573 / CFN 42), this protein is 3-oxo-isoapionate-4-phosphate decarboxylase.